We begin with the raw amino-acid sequence, 638 residues long: Phosphomethylpyrimidine synthase (638 aa).

Substrate contacts are provided by residues N236, M265, Y294, H330, 350–352, 391–394, and E430; these read SRG and DGLR. H434 contacts Zn(2+). Y457 provides a ligand contact to substrate. Position 498 (H498) interacts with Zn(2+). 3 residues coordinate [4Fe-4S] cluster: C578, C581, and C586. A compositionally biased stretch (low complexity) spans 608 to 624; that stretch reads AEGASQQEAEQGMQEMS. The segment at 608–633 is disordered; the sequence is AEGASQQEAEQGMQEMSQKYKDAGRR.

This sequence belongs to the ThiC family. As to quaternary structure, homodimer. Requires [4Fe-4S] cluster as cofactor.

The catalysed reaction is 5-amino-1-(5-phospho-beta-D-ribosyl)imidazole + S-adenosyl-L-methionine = 4-amino-2-methyl-5-(phosphooxymethyl)pyrimidine + CO + 5'-deoxyadenosine + formate + L-methionine + 3 H(+). The protein operates within cofactor biosynthesis; thiamine diphosphate biosynthesis. Functionally, catalyzes the synthesis of the hydroxymethylpyrimidine phosphate (HMP-P) moiety of thiamine from aminoimidazole ribotide (AIR) in a radical S-adenosyl-L-methionine (SAM)-dependent reaction. In Hahella chejuensis (strain KCTC 2396), this protein is Phosphomethylpyrimidine synthase.